The primary structure comprises 613 residues: Lysophospholipase 1 (613 aa).

A signal peptide spans Met-1–Ala-21. The PLA2c domain maps to Asp-55–Asp-593. 13 N-linked (GlcNAc...) asparagine glycosylation sites follow: Asn-142, Asn-173, Asn-220, Asn-244, Asn-281, Asn-319, Asn-348, Asn-365, Asn-494, Asn-499, Asn-523, Asn-551, and Asn-572.

It belongs to the lysophospholipase family.

It localises to the secreted. The enzyme catalyses a 1-acyl-sn-glycero-3-phosphocholine + H2O = sn-glycerol 3-phosphocholine + a fatty acid + H(+). Its function is as follows. Catalyzes the release of fatty acids from lysophospholipids. Required for survival under high osmolarity, for normal osmotic stress-induced gene expression, and for nutrient-mediated repression of sexual differentiation. This Schizosaccharomyces pombe (strain 972 / ATCC 24843) (Fission yeast) protein is Lysophospholipase 1 (plb1).